Consider the following 426-residue polypeptide: GTPase Obg (426 aa).

In terms of domain architecture, Obg spans Met1 to Val158. The region spanning Ala159 to Lys330 is the OBG-type G domain. GTP contacts are provided by residues Gly165–Ser172, Phe190–Lys194, Asp212–Gly215, Asn282–Asp285, and Ser311–Ala313. Positions 172 and 192 each coordinate Mg(2+). Residues Asp349–Glu426 form the OCT domain.

It belongs to the TRAFAC class OBG-HflX-like GTPase superfamily. OBG GTPase family. In terms of assembly, monomer. Mg(2+) is required as a cofactor.

The protein localises to the cytoplasm. In terms of biological role, an essential GTPase which binds GTP, GDP and possibly (p)ppGpp with moderate affinity, with high nucleotide exchange rates and a fairly low GTP hydrolysis rate. Plays a role in control of the cell cycle, stress response, ribosome biogenesis and in those bacteria that undergo differentiation, in morphogenesis control. This chain is GTPase Obg, found in Halothermothrix orenii (strain H 168 / OCM 544 / DSM 9562).